We begin with the raw amino-acid sequence, 157 residues long: Crossover junction endodeoxyribonuclease RuvC (157 aa).

Catalysis depends on residues Asp-7, Glu-67, and Asp-140. Asp-7, Glu-67, and Asp-140 together coordinate Mg(2+).

The protein belongs to the RuvC family. In terms of assembly, homodimer which binds Holliday junction (HJ) DNA. The HJ becomes 2-fold symmetrical on binding to RuvC with unstacked arms; it has a different conformation from HJ DNA in complex with RuvA. In the full resolvosome a probable DNA-RuvA(4)-RuvB(12)-RuvC(2) complex forms which resolves the HJ. Requires Mg(2+) as cofactor.

Its subcellular location is the cytoplasm. The catalysed reaction is Endonucleolytic cleavage at a junction such as a reciprocal single-stranded crossover between two homologous DNA duplexes (Holliday junction).. Its function is as follows. The RuvA-RuvB-RuvC complex processes Holliday junction (HJ) DNA during genetic recombination and DNA repair. Endonuclease that resolves HJ intermediates. Cleaves cruciform DNA by making single-stranded nicks across the HJ at symmetrical positions within the homologous arms, yielding a 5'-phosphate and a 3'-hydroxyl group; requires a central core of homology in the junction. The consensus cleavage sequence is 5'-(A/T)TT(C/G)-3'. Cleavage occurs on the 3'-side of the TT dinucleotide at the point of strand exchange. HJ branch migration catalyzed by RuvA-RuvB allows RuvC to scan DNA until it finds its consensus sequence, where it cleaves and resolves the cruciform DNA. The protein is Crossover junction endodeoxyribonuclease RuvC of Rickettsia typhi (strain ATCC VR-144 / Wilmington).